Consider the following 84-residue polypeptide: Toxin-like TcoNTxP1 (84 aa).

The signal sequence occupies residues 1–19; it reads MKRMILFTSCLLLIDIVVG. In terms of domain architecture, LCN-type CS-alpha/beta spans 21 to 82; that stretch reads KEGYPADSKG…VWDSATNKCG (62 aa). 4 disulfides stabilise this stretch: Cys-31–Cys-81, Cys-35–Cys-57, Cys-43–Cys-62, and Cys-47–Cys-64. Cys-81 is modified (cysteine amide). Residues 82–84 constitute a propeptide that is removed on maturation; that stretch reads GKK.

Expressed by the venom gland.

The protein localises to the secreted. Its function is as follows. This protein is not toxic. It induces an immune response similar to that induced by whole venom. Thus, polyclonal antibodies raised against this protein can neutralize the effects of the venom. This chain is Toxin-like TcoNTxP1, found in Tityus costatus (Brazilian scorpion).